The chain runs to 438 residues: Argininosuccinate lyase (438 aa).

Belongs to the lyase 1 family. Argininosuccinate lyase subfamily.

The protein resides in the cytoplasm. It carries out the reaction 2-(N(omega)-L-arginino)succinate = fumarate + L-arginine. The protein operates within amino-acid biosynthesis; L-arginine biosynthesis; L-arginine from L-ornithine and carbamoyl phosphate: step 3/3. This chain is Argininosuccinate lyase, found in Clostridioides difficile (strain 630) (Peptoclostridium difficile).